Here is a 403-residue protein sequence, read N- to C-terminus: Acetate kinase (403 aa).

N7 serves as a coordination point for Mg(2+). ATP is bound at residue K14. Position 90 (R90) interacts with substrate. Catalysis depends on D147, which acts as the Proton donor/acceptor. Residues H207–G211, D283–R285, and G331–N335 each bind ATP. E386 is a Mg(2+) binding site.

It belongs to the acetokinase family. As to quaternary structure, homodimer. The cofactor is Mg(2+). It depends on Mn(2+) as a cofactor.

Its subcellular location is the cytoplasm. The catalysed reaction is acetate + ATP = acetyl phosphate + ADP. The protein operates within metabolic intermediate biosynthesis; acetyl-CoA biosynthesis; acetyl-CoA from acetate: step 1/2. Functionally, catalyzes the formation of acetyl phosphate from acetate and ATP. Can also catalyze the reverse reaction. The sequence is that of Acetate kinase from Thermotoga petrophila (strain ATCC BAA-488 / DSM 13995 / JCM 10881 / RKU-1).